Consider the following 476-residue polypeptide: Serine carboxypeptidase 2 (476 aa).

The N-terminal stretch at 1–34 (MRTTTRRLPPAPAAAAVLLAALTCLLLRPAAVAA) is a signal peptide. 3 disulfide bridges follow: Cys-97–Cys-353, Cys-254–Cys-266, and Cys-290–Cys-320. Asn-148 and Asn-159 each carry an N-linked (GlcNAc...) asparagine glycan. Ser-190 is an active-site residue. Residue Asn-291 is glycosylated (N-linked (GlcNAc...) asparagine). Positions 295–313 (SSSSSSLSRRRTRGRYPWL) are cleaved as a propeptide — linker peptide. Thr-314 is modified (blocked amino end (Thr)). Residues Asn-341 and Asn-347 are each glycosylated (N-linked (GlcNAc...) asparagine). Residue Asn-352 is glycosylated (N-linked (GlcNAc...) asparagine; partial). The O-linked (GalNAc...) threonine; in variant 351-AT-352 glycan is linked to Asn-352. Active-site residues include Asp-390 and His-443. Residue Asn-472 is glycosylated (N-linked (GlcNAc...) asparagine).

This sequence belongs to the peptidase S10 family. In terms of assembly, carboxypeptidase II is a dimer, where each monomer is composed of two chains linked by a disulfide bond.

It localises to the secreted. It catalyses the reaction Preferential release of a C-terminal arginine or lysine residue.. Its function is as follows. May be involved in the degradation of small peptides (2-5 residues) or in the degradation of storage proteins in the embryo. The chain is Serine carboxypeptidase 2 (CBP2) from Hordeum vulgare (Barley).